Here is a 383-residue protein sequence, read N- to C-terminus: Dual-specificity RNA methyltransferase RlmN (383 aa).

Catalysis depends on Glu93, which acts as the Proton acceptor. Residues 99–339 form the Radical SAM core domain; that stretch reads EETRGTLCVS…TTIRKTRGDD (241 aa). Residues Cys106 and Cys344 are joined by a disulfide bond. [4Fe-4S] cluster-binding residues include Cys113, Cys117, and Cys120. Residues 170-171, Ser202, 224-226, and Asn301 contribute to the S-adenosyl-L-methionine site; these read GE and SLH. The active-site S-methylcysteine intermediate is Cys344.

Belongs to the radical SAM superfamily. RlmN family. The cofactor is [4Fe-4S] cluster.

The protein resides in the cytoplasm. The enzyme catalyses adenosine(2503) in 23S rRNA + 2 reduced [2Fe-2S]-[ferredoxin] + 2 S-adenosyl-L-methionine = 2-methyladenosine(2503) in 23S rRNA + 5'-deoxyadenosine + L-methionine + 2 oxidized [2Fe-2S]-[ferredoxin] + S-adenosyl-L-homocysteine. It catalyses the reaction adenosine(37) in tRNA + 2 reduced [2Fe-2S]-[ferredoxin] + 2 S-adenosyl-L-methionine = 2-methyladenosine(37) in tRNA + 5'-deoxyadenosine + L-methionine + 2 oxidized [2Fe-2S]-[ferredoxin] + S-adenosyl-L-homocysteine. Its function is as follows. Specifically methylates position 2 of adenine 2503 in 23S rRNA and position 2 of adenine 37 in tRNAs. m2A2503 modification seems to play a crucial role in the proofreading step occurring at the peptidyl transferase center and thus would serve to optimize ribosomal fidelity. The chain is Dual-specificity RNA methyltransferase RlmN from Ralstonia nicotianae (strain ATCC BAA-1114 / GMI1000) (Ralstonia solanacearum).